A 104-amino-acid chain; its full sequence is UPF0213 protein ORF82 (104 aa).

The region spanning 7-83 (KVWCVYIVRR…KRKRGKYFKL (77 aa)) is the GIY-YIG domain.

Belongs to the UPF0213 family.

This chain is UPF0213 protein ORF82, found in Orgyia pseudotsugata (Douglas-fir tussock moth).